We begin with the raw amino-acid sequence, 3373 residues long: Intermembrane lipid transfer protein vps13A (3373 aa).

The Chorein N-terminal domain maps to 3–119; the sequence is FEGLVSDVLS…QAELKKKKLE (117 aa). 5 disordered regions span residues 818–858, 1028–1096, 1259–1304, 1648–1729, and 1872–1913; these read PKAT…VNSS, VPIN…KTAS, NNNK…DLEK, DPSI…EEEK, and QKKR…GKKD. The segment covering 823–839 has biased composition (polar residues); it reads TPINDSNSPSSVSPKLI. Low complexity-rich tracts occupy residues 840–858 and 1048–1066; these read STSP…VNSS and SSPN…QSPQ. Composition is skewed to basic and acidic residues over residues 1263-1274 and 1288-1304; these read SIEKSKSIDSKL and RSDD…DLEK. Composition is skewed to low complexity over residues 1659-1685, 1695-1716, and 1884-1898; these read QQQQ…RSQS, SSIG…SLSS, and SSST…STNS. Residues 1899-1909 show a composition bias toward polar residues; sequence FQTSTSGNSNS. The region spanning 2405–2706 is the SHR-BD domain; the sequence is TLSFYCQYWL…CYGWDEPSAE (302 aa). The segment at 2909 to 2933 is disordered; that stretch reads RGNNASNNNNNNGMTSSQMRQSGSG. Over residues 2911–2920 the composition is skewed to low complexity; the sequence is NNASNNNNNN.

It belongs to the VPS13 family.

Its subcellular location is the membrane. In terms of biological role, mediates the transfer of lipids between membranes at organelle contact sites. This chain is Intermembrane lipid transfer protein vps13A (vps13A), found in Dictyostelium discoideum (Social amoeba).